A 451-amino-acid chain; its full sequence is FAD-dependent monooxygenase adrH (451 aa).

FAD-binding residues include E39, G53, and R112. Residue Y196 is part of the active site. FAD is bound by residues D288 and A301. N385 carries N-linked (GlcNAc...) asparagine glycosylation. The chain crosses the membrane as a helical span at residues 426–446 (TLLWVSSLALFLFFPWLGSYL).

Belongs to the paxM FAD-dependent monooxygenase family. The cofactor is FAD.

Its subcellular location is the membrane. Its pathway is secondary metabolite biosynthesis; terpenoid biosynthesis. Its function is as follows. FAD-dependent monooxygenase; part of the gene cluster that mediates the biosynthesis of andrastins, meroterpenoid compounds that exhibit inhibitory activity against ras farnesyltransferase, suggesting that they could be promising leads for antitumor agents. The first step of the pathway is the synthesis of 3,5-dimethylorsellinic acid (DMOA) by the polyketide synthase adrD via condensation of one acetyl-CoA starter unit with 3 malonyl-CoA units and 2 methylations. DMAO is then converted to farnesyl-DMAO by the prenyltransferase adrG. The methyltransferase adrK catalyzes the methylation of the carboxyl group of farnesyl-DMAO to farnesyl-DMAO methyl ester which is further converted to epoxyfarnesyl-DMAO methyl ester by the FAD-dependent monooxygenase adrH. The terpene cyclase adrI then catalyzes the carbon skeletal rearrangement to generate the andrastin E, the first compound in the pathway having the andrastin scaffold, with the tetracyclic ring system. The post-cyclization tailoring enzymes adrF, adrE, adrJ, and adrA, are involved in the conversion of andrastin E into andrastin A. The short chain dehydrogenase adrF is responsible for the oxidation of the C-3 a hydroxyl group of andrastin E to yield the corresponding ketone, andrastin D. The ketoreductase adrE stereoselectively reduces the carbonyl moiety to reverse the stereochemistry of the C-3 position to yield andrastin F. The acetyltransferase adrJ is the acetyltransferase that attaches the acetyl group to the C-3 hydroxyl group of andrastin F to yield andrastin C. Finally, the cytochrome P450 monooxygenase adrA catalyzes two sequential oxidation reactions of the C-23 methyl group, to generate the corresponding alcohol andrastin B, and aldehyde andrastin A. The sequence is that of FAD-dependent monooxygenase adrH from Penicillium rubens (strain ATCC 28089 / DSM 1075 / NRRL 1951 / Wisconsin 54-1255) (Penicillium chrysogenum).